The chain runs to 285 residues: Acetyl-coenzyme A carboxylase carboxyl transferase subunit beta (285 aa).

The CoA carboxyltransferase N-terminal domain occupies 33-285 (MWIKCSKCGK…TLGNILRMHS (253 aa)). C37, C40, C56, and C59 together coordinate Zn(2+). Residues 37–59 (CSKCGKILYKSDVDDNFKVCPKC) form a C4-type zinc finger.

It belongs to the AccD/PCCB family. Acetyl-CoA carboxylase is a heterohexamer composed of biotin carboxyl carrier protein (AccB), biotin carboxylase (AccC) and two subunits each of ACCase subunit alpha (AccA) and ACCase subunit beta (AccD). Requires Zn(2+) as cofactor.

The protein resides in the cytoplasm. The catalysed reaction is N(6)-carboxybiotinyl-L-lysyl-[protein] + acetyl-CoA = N(6)-biotinyl-L-lysyl-[protein] + malonyl-CoA. It functions in the pathway lipid metabolism; malonyl-CoA biosynthesis; malonyl-CoA from acetyl-CoA: step 1/1. Its function is as follows. Component of the acetyl coenzyme A carboxylase (ACC) complex. Biotin carboxylase (BC) catalyzes the carboxylation of biotin on its carrier protein (BCCP) and then the CO(2) group is transferred by the transcarboxylase to acetyl-CoA to form malonyl-CoA. In Clostridium acetobutylicum (strain ATCC 824 / DSM 792 / JCM 1419 / IAM 19013 / LMG 5710 / NBRC 13948 / NRRL B-527 / VKM B-1787 / 2291 / W), this protein is Acetyl-coenzyme A carboxylase carboxyl transferase subunit beta.